The chain runs to 603 residues: Cdc42-interacting protein 4 (603 aa).

Residues 1 to 117 (MDWGTELWDQ…EMKQERKMHF (117 aa)) are required for podosome formation and interaction with AKAP9 and microtubules. A required for translocation to the plasma membrane in response to insulin region spans residues 1 to 117 (MDWGTELWDQ…EMKQERKMHF (117 aa)). The 264-residue stretch at 1–264 (MDWGTELWDQ…AAESVDAKND (264 aa)) folds into the F-BAR domain. Residues 67–259 (FSQQQSFVQL…EGMKVAAESV (193 aa)) adopt a coiled-coil conformation. The tract at residues 293 to 539 (RVPSDSSLGT…YTEFDEDFEE (247 aa)) is interaction with CDC42. Residues 293 to 603 (RVPSDSSLGT…PTSYLRVTLN (311 aa)) form an interaction with PDE6G region. The interval 295–358 (PSDSSLGTPD…PSSPRSGRDP (64 aa)) is disordered. Ser-296, Ser-298, and Ser-299 each carry phosphoserine. The segment covering 316–329 (SRAKRWPFGKKNKP) has biased composition (basic residues). Residues 333-346 (SLSLLGGHLPSTLS) show a composition bias toward low complexity. Residues Ser-335 and Ser-351 each carry the phosphoserine modification. Positions 388 to 481 (TEDFSHLPPE…ESRVLSNRGD (94 aa)) form a coiled coil. The 78-residue stretch at 393 to 470 (HLPPEQQRKR…VQKYEAWLAE (78 aa)) folds into the REM-1 domain. A required for interaction with FASLG and localization to lysosomes region spans residues 471-603 (AESRVLSNRG…PTSYLRVTLN (133 aa)). Residues 477-541 (SNRGDSLSRH…EFDEDFEEPA (65 aa)) are disordered. Ser-482 bears the Phosphoserine mark. The interaction with DNM2 and WASL stretch occupies residues 487–543 (ARPPDPPTTAPPDSSSSSTNSGSQDNKESSSEEPPSEGQDTPIYTEFDEDFEEPASP). The segment covering 497–510 (PPDSSSSSTNSGSQ) has biased composition (low complexity). Positions 532–603 (EFDEDFEEPA…PTSYLRVTLN (72 aa)) are interaction with DNM1 and WASL. A required for podosome formation region spans residues 540 to 603 (PASPIGQCVA…PTSYLRVTLN (64 aa)). The SH3 domain maps to 542–603 (SPIGQCVAIY…PTSYLRVTLN (62 aa)). Residues 546–603 (QCVAIYHFEGSSEGTVSMSEGEDLSLMEEDKGDGWTRVRRKQGAEGYVPTSYLRVTLN) are interaction with WAS. The tract at residues 548–603 (VAIYHFEGSSEGTVSMSEGEDLSLMEEDKGDGWTRVRRKQGAEGYVPTSYLRVTLN) is interaction with ARHGAP17, DAAM1, DIAPH1 and DIAPH2.

Belongs to the FNBP1 family. As to quaternary structure, homodimerizes, the dimers can polymerize end-to-end to form filamentous structures. Interacts with AKAP9, ARHGAP17, DAAM1, DIAPH1, DIAPH2, DNM1, FASLG/FASL, GAPVD1, LYN, microtubules, PDE6G, SRC and WAS/WASP. Interacts with the ligand binding domain of the thyroid receptor (TR) in the presence of thyroid hormone. May interact with CTNNB1 and HD/HTT. Interacts specifically with GTP-bound CDC42 and RHOQ. Interacts with DNM2 and WASL. Tyrosine phosphorylated. Also phosphorylated by PKA.

It localises to the cytoplasm. Its subcellular location is the cytoskeleton. The protein resides in the cell cortex. The protein localises to the lysosome. It is found in the golgi apparatus. It localises to the cell membrane. Its subcellular location is the cell projection. The protein resides in the phagocytic cup. Its function is as follows. Required to coordinate membrane tubulation with reorganization of the actin cytoskeleton during endocytosis. Binds to lipids such as phosphatidylinositol 4,5-bisphosphate and phosphatidylserine and promotes membrane invagination and the formation of tubules. Also promotes CDC42-induced actin polymerization by recruiting WASL/N-WASP which in turn activates the Arp2/3 complex. Actin polymerization may promote the fission of membrane tubules to form endocytic vesicles. Required for the formation of podosomes, actin-rich adhesion structures specific to monocyte-derived cells. May be required for the lysosomal retention of FASLG/FASL. Required for translocation of GLUT4 to the plasma membrane in response to insulin signaling. The polypeptide is Cdc42-interacting protein 4 (Trip10) (Mus musculus (Mouse)).